The sequence spans 384 residues: 5-cytosine rRNA methyltransferase NSUN4 (384 aa).

A mitochondrion-targeting transit peptide spans 1–25; it reads MAALVVRGVRDMLKRADFATVPRRQ. Residues glycine 185, glycine 186, lysine 187, and aspartate 204 each contribute to the S-adenosyl-L-methionine site. The residue at position 206 (serine 206) is a Phosphoserine. S-adenosyl-L-methionine is bound by residues arginine 209, aspartate 237, glycine 238, and aspartate 255. The active-site Nucleophile is cysteine 310.

It belongs to the class I-like SAM-binding methyltransferase superfamily. RsmB/NOP family. Heterodimer with MTERFD2/MTERF4; this interaction seems to be required for NSUN4 recruitment to the mitochondrial large ribosomal subunit.

Its subcellular location is the mitochondrion. The enzyme catalyses a cytidine in rRNA + S-adenosyl-L-methionine = a 5-methylcytidine in rRNA + S-adenosyl-L-homocysteine + H(+). It carries out the reaction a cytidine in mRNA + S-adenosyl-L-methionine = a 5-methylcytidine in mRNA + S-adenosyl-L-homocysteine + H(+). Functionally, mitochondrial RNA cytosine C(5)-methyltransferase that methylates cytosine to 5-methylcytosine (m5C) in various RNAs, such as rRNAs, mRNAs and some long non-coding RNAs (lncRNAs). Involved in mitochondrial ribosome small subunit (SSU) maturation by catalyzing methylation of mitochondrial 12S rRNA; the function is independent of MTERFD2/MTERF4 and assembled mitochondrial ribosome large subunit (LSU). Targeted to LSU by MTERFD2/MTERF4 and probably is involved in a final step in ribosome biogenesis to ensure that SSU and LSU are assembled. In vitro can methylate 16S rRNA of the LSU; the methylation is enhanced by MTERFD/MTERF4. Also acts as a regulator of innate immunity by marking double-stranded mitochondrial RNAs(mt-dsRNAs) generated in response to stress: catalyzes m5C modification on mitochondrial RNAs, such as a mRNAs and lncRNAs, with a preference for the termini of light-strand lncRNAs, promoting their degradation and cytosolic release. Modified light-strand lncRNAs are then recognized by C1QBP reader and recruited to the mitochondrial degradosome complex, which promotes their degradation. The polypeptide is 5-cytosine rRNA methyltransferase NSUN4 (NSUN4) (Bos taurus (Bovine)).